A 147-amino-acid polypeptide reads, in one-letter code: uncharacterized protein (147 aa).

This is an uncharacterized protein from Ureaplasma parvum serovar 3 (strain ATCC 700970).